The primary structure comprises 102 residues: Small ribosomal subunit protein uS10 (102 aa).

The protein belongs to the universal ribosomal protein uS10 family. In terms of assembly, part of the 30S ribosomal subunit.

Involved in the binding of tRNA to the ribosomes. In Streptomyces griseus subsp. griseus (strain JCM 4626 / CBS 651.72 / NBRC 13350 / KCC S-0626 / ISP 5235), this protein is Small ribosomal subunit protein uS10.